The primary structure comprises 527 residues: Cytokinin dehydrogenase 6 (527 aa).

The first 22 residues, methionine 1–glycine 22, serve as a signal peptide directing secretion. Positions valine 55 to alanine 236 constitute an FAD-binding PCMH-type domain. Residues glycine 91 and glycine 93 each coordinate FAD. Histidine 94 is modified (pros-8alpha-FAD histidine). Residues serine 95 and glutamine 99 each contribute to the FAD site. An N-linked (GlcNAc...) asparagine glycan is attached at asparagine 121. Residues aspartate 160, threonine 165, serine 171, isoleucine 175, and isoleucine 226 each coordinate FAD. N-linked (GlcNAc...) asparagine glycosylation is found at asparagine 280 and asparagine 323. The FAD site is built by tyrosine 475, serine 510, and glutamine 513.

It belongs to the oxygen-dependent FAD-linked oxidoreductase family. As to quaternary structure, monomer. It depends on FAD as a cofactor.

It localises to the secreted. It is found in the extracellular space. It catalyses the reaction N(6)-dimethylallyladenine + A + H2O = 3-methyl-2-butenal + adenine + AH2. Catalyzes the oxidation of cytokinins, a family of N(6)-substituted adenine derivatives that are plant hormones, where the substituent is an isopentenyl group. The chain is Cytokinin dehydrogenase 6 (CKX6) from Oryza sativa subsp. japonica (Rice).